The following is a 242-amino-acid chain: Aspartate/glutamate leucyltransferase (242 aa).

It belongs to the R-transferase family. Bpt subfamily.

It localises to the cytoplasm. It carries out the reaction N-terminal L-glutamyl-[protein] + L-leucyl-tRNA(Leu) = N-terminal L-leucyl-L-glutamyl-[protein] + tRNA(Leu) + H(+). The catalysed reaction is N-terminal L-aspartyl-[protein] + L-leucyl-tRNA(Leu) = N-terminal L-leucyl-L-aspartyl-[protein] + tRNA(Leu) + H(+). Functionally, functions in the N-end rule pathway of protein degradation where it conjugates Leu from its aminoacyl-tRNA to the N-termini of proteins containing an N-terminal aspartate or glutamate. The polypeptide is Aspartate/glutamate leucyltransferase (Chromobacterium violaceum (strain ATCC 12472 / DSM 30191 / JCM 1249 / CCUG 213 / NBRC 12614 / NCIMB 9131 / NCTC 9757 / MK)).